We begin with the raw amino-acid sequence, 226 residues long: MNPIVINRLQRKLGYTFNHQELLQQALTHRSASSKHNERLEFLGDSILSFVIANALYHRFPRVDEGDMSRMRATLVRGNTLAELAREFDLGECLRLGPGELKSGGFRRESILADTVEALIGGVFLDSNIQTVEQLILNWYKTRLDEISPGDKQKDPKTRLQEYLQGHHLPLPSYLVVQVRGEAHDQEFTIHCQVSGLSEPVVGTGSSRRKAEQAAAEQALKKLELE.

An RNase III domain is found at 6-128 (INRLQRKLGY…LIGGVFLDSN (123 aa)). Residue E41 participates in Mg(2+) binding. Residue D45 is part of the active site. Mg(2+) contacts are provided by D114 and E117. E117 is an active-site residue. The DRBM domain occupies 155 to 225 (DPKTRLQEYL…AEQALKKLEL (71 aa)).

This sequence belongs to the ribonuclease III family. As to quaternary structure, homodimer. Mg(2+) serves as cofactor.

It is found in the cytoplasm. It catalyses the reaction Endonucleolytic cleavage to 5'-phosphomonoester.. Digests double-stranded RNA. Involved in the processing of primary rRNA transcript to yield the immediate precursors to the large and small rRNAs (23S and 16S). Processes some mRNAs, and tRNAs when they are encoded in the rRNA operon. Processes pre-crRNA and tracrRNA of type II CRISPR loci if present in the organism. The polypeptide is Ribonuclease 3 (Salmonella typhi).